A 244-amino-acid polypeptide reads, in one-letter code: 3-deoxy-manno-octulosonate cytidylyltransferase (244 aa).

Belongs to the KdsB family.

The protein resides in the cytoplasm. It carries out the reaction 3-deoxy-alpha-D-manno-oct-2-ulosonate + CTP = CMP-3-deoxy-beta-D-manno-octulosonate + diphosphate. It functions in the pathway nucleotide-sugar biosynthesis; CMP-3-deoxy-D-manno-octulosonate biosynthesis; CMP-3-deoxy-D-manno-octulosonate from 3-deoxy-D-manno-octulosonate and CTP: step 1/1. It participates in bacterial outer membrane biogenesis; lipopolysaccharide biosynthesis. In terms of biological role, activates KDO (a required 8-carbon sugar) for incorporation into bacterial lipopolysaccharide in Gram-negative bacteria. The chain is 3-deoxy-manno-octulosonate cytidylyltransferase from Flavobacterium johnsoniae (strain ATCC 17061 / DSM 2064 / JCM 8514 / BCRC 14874 / CCUG 350202 / NBRC 14942 / NCIMB 11054 / UW101) (Cytophaga johnsonae).